A 484-amino-acid chain; its full sequence is uncharacterized protein (484 aa).

This is an uncharacterized protein from Orgyia pseudotsugata multicapsid polyhedrosis virus (OpMNPV).